The sequence spans 209 residues: Casparian strip membrane protein 1 (209 aa).

The interval 1-35 (MKTGESTAIDIAPETNNSGPIGKKKSTTPLLAAPV) is disordered. Topologically, residues 1-46 (MKTGESTAIDIAPETNNSGPIGKKKSTTPLLAAPVPDRGTHRMKRG) are cytoplasmic. A helical transmembrane segment spans residues 47–67 (LAIFDFVLRIGVLASALAAAA). The Extracellular segment spans residues 68–96 (AMGTSEQTLPFFTQFFQFEASYDDLPTFQ). Residues 97–117 (FFVVAMAVVAGYVVLSIPFSI) form a helical membrane-spanning segment. Residues 118–129 (VCIIRPHAAGPR) are Cytoplasmic-facing. The chain crosses the membrane as a helical span at residues 130-150 (VLLLILDSVALTLNTAAAGAA). The Extracellular segment spans residues 151 to 182 (AAVVSLAHSGNSSTNWLAICNQFGDFCQQASG). A glycan (N-linked (GlcNAc...) asparagine) is linked at Asn-161. Residues 183–203 (AVVGSFAAVLLFLLLILFSAL) traverse the membrane as a helical segment. Topologically, residues 204 to 209 (SLKNSH) are cytoplasmic.

This sequence belongs to the Casparian strip membrane proteins (CASP) family. As to quaternary structure, homodimer and heterodimers.

The protein localises to the cell membrane. Regulates membrane-cell wall junctions and localized cell wall deposition. Required for establishment of the Casparian strip membrane domain (CSD) and the subsequent formation of Casparian strips, a cell wall modification of the root endodermis that determines an apoplastic barrier between the intraorganismal apoplasm and the extraorganismal apoplasm and prevents lateral diffusion. This is Casparian strip membrane protein 1 from Cucumis melo (Muskmelon).